A 2155-amino-acid chain; its full sequence is Alpha-tectorin (2155 aa).

The first 22 residues, methionine 1–alanine 22, serve as a signal peptide directing secretion. Asparagine 34, asparagine 187, asparagine 215, asparagine 278, asparagine 455, asparagine 506, asparagine 528, and asparagine 560 each carry an N-linked (GlcNAc...) asparagine glycan. Residues proline 98–lysine 252 enclose the NIDO domain. In terms of domain architecture, VWFC spans cysteine 260–cysteine 314. The region spanning serine 320–aspartate 500 is the VWFD 1 domain. Intrachain disulfides connect cysteine 322–cysteine 461 and cysteine 344–cysteine 499. The TIL 1 domain maps to cysteine 597 to cysteine 650. N-linked (GlcNAc...) asparagine glycans are attached at residues asparagine 670, asparagine 687, asparagine 813, asparagine 843, asparagine 855, asparagine 898, asparagine 920, asparagine 931, and asparagine 949. A VWFD 2 domain is found at threonine 711–asparagine 886. A disulfide bridge links cysteine 713 with cysteine 849. In terms of domain architecture, TIL 2 spans cysteine 984–cysteine 1036. Residues asparagine 1048, asparagine 1235, and asparagine 1364 are each glycosylated (N-linked (GlcNAc...) asparagine). One can recognise a VWFD 3 domain in the interval alanine 1098–glutamine 1278. Disulfide bonds link cysteine 1100–cysteine 1241 and cysteine 1122–cysteine 1277. In terms of domain architecture, TIL 3 spans cysteine 1372 to cysteine 1425. A VWFD 4 domain is found at serine 1485–asparagine 1666. Intrachain disulfides connect cysteine 1487–cysteine 1622, cysteine 1509–cysteine 1665, cysteine 1717–cysteine 1775, cysteine 1741–cysteine 1784, cysteine 1786–cysteine 1818, cysteine 1806–cysteine 1898, and cysteine 1837–cysteine 1857. N-linked (GlcNAc...) asparagine glycosylation is found at asparagine 1538, asparagine 1565, asparagine 1756, asparagine 1772, asparagine 1794, asparagine 1851, asparagine 1864, asparagine 1880, asparagine 1920, and asparagine 1939. The ZP domain maps to threonine 1805–asparagine 2059. Disulfide bonds link cysteine 1980–cysteine 2040, cysteine 2001–cysteine 2056, and cysteine 2045–cysteine 2052. Asparagine 2091 carries the GPI-anchor amidated asparagine lipid modification. A propeptide spans glycine 2092–serine 2155 (removed in mature form).

As to quaternary structure, may form homomeric filament after self-association or heteromeric filament after association with beta-tectorin. Interacts with CEACAM16. The presence of a hydrophobic C-terminus preceded by a potential cleavage site strongly suggests that tectorins are synthesized as glycosylphosphatidylinositol-linked, membrane-bound precursors. Tectorins are targeted to the apical surface of the inner ear epithelia by the lipid and proteolytically released into the extracellular compartment.

It localises to the cell membrane. It is found in the secreted. The protein resides in the extracellular space. Its subcellular location is the extracellular matrix. In terms of biological role, one of the major non-collagenous components of the tectorial membrane. The tectorial membrane is an extracellular matrix of the inner ear that covers the neuroepithelium of the cochlea and contacts the stereocilia bundles of specialized sensory hair cells. Sound induces movement of these hair cells relative to the tectorial membrane, deflects the stereocilia and leads to fluctuations in hair-cell membrane potential, transducing sound into electrical signals. The protein is Alpha-tectorin (TECTA) of Homo sapiens (Human).